Here is a 271-residue protein sequence, read N- to C-terminus: Indole-3-glycerol phosphate synthase (271 aa).

Belongs to the TrpC family.

It catalyses the reaction 1-(2-carboxyphenylamino)-1-deoxy-D-ribulose 5-phosphate + H(+) = (1S,2R)-1-C-(indol-3-yl)glycerol 3-phosphate + CO2 + H2O. Its pathway is amino-acid biosynthesis; L-tryptophan biosynthesis; L-tryptophan from chorismate: step 4/5. This Haloarcula marismortui (strain ATCC 43049 / DSM 3752 / JCM 8966 / VKM B-1809) (Halobacterium marismortui) protein is Indole-3-glycerol phosphate synthase.